A 195-amino-acid chain; its full sequence is ATP-dependent Clp protease proteolytic subunit (195 aa).

The active-site Nucleophile is S97. The active site involves H122.

Belongs to the peptidase S14 family. In terms of assembly, fourteen ClpP subunits assemble into 2 heptameric rings which stack back to back to give a disk-like structure with a central cavity, resembling the structure of eukaryotic proteasomes.

The protein localises to the cytoplasm. The catalysed reaction is Hydrolysis of proteins to small peptides in the presence of ATP and magnesium. alpha-casein is the usual test substrate. In the absence of ATP, only oligopeptides shorter than five residues are hydrolyzed (such as succinyl-Leu-Tyr-|-NHMec, and Leu-Tyr-Leu-|-Tyr-Trp, in which cleavage of the -Tyr-|-Leu- and -Tyr-|-Trp bonds also occurs).. Cleaves peptides in various proteins in a process that requires ATP hydrolysis. Has a chymotrypsin-like activity. Plays a major role in the degradation of misfolded proteins. In Lactobacillus acidophilus (strain ATCC 700396 / NCK56 / N2 / NCFM), this protein is ATP-dependent Clp protease proteolytic subunit.